Reading from the N-terminus, the 211-residue chain is Phosphatidylglycerophosphatase C (211 aa).

Residues methionine 1–arginine 33 are Cytoplasmic-facing. Residues glutamine 34–isoleucine 54 form a helical membrane-spanning segment. The Periplasmic segment spans residues lysine 55–glutamate 211.

The cofactor is Mg(2+).

The protein resides in the cell inner membrane. It carries out the reaction a 1,2-diacyl-sn-glycero-3-phospho-(1'-sn-glycero-3'-phosphate) + H2O = a 1,2-diacyl-sn-glycero-3-phospho-(1'-sn-glycerol) + phosphate. Its pathway is phospholipid metabolism; phosphatidylglycerol biosynthesis; phosphatidylglycerol from CDP-diacylglycerol: step 2/2. Functionally, lipid phosphatase which dephosphorylates phosphatidylglycerophosphate (PGP) to phosphatidylglycerol (PG). This chain is Phosphatidylglycerophosphatase C (pgpC), found in Escherichia coli (strain K12).